A 237-amino-acid chain; its full sequence is NAD(P)H-quinone oxidoreductase subunit K (237 aa).

Residues Cys52, Cys53, Cys117, and Cys148 each coordinate [4Fe-4S] cluster.

It belongs to the complex I 20 kDa subunit family. In terms of assembly, NDH-1 can be composed of about 15 different subunits; different subcomplexes with different compositions have been identified which probably have different functions. [4Fe-4S] cluster serves as cofactor.

It is found in the cellular thylakoid membrane. It carries out the reaction a plastoquinone + NADH + (n+1) H(+)(in) = a plastoquinol + NAD(+) + n H(+)(out). It catalyses the reaction a plastoquinone + NADPH + (n+1) H(+)(in) = a plastoquinol + NADP(+) + n H(+)(out). NDH-1 shuttles electrons from an unknown electron donor, via FMN and iron-sulfur (Fe-S) centers, to quinones in the respiratory and/or the photosynthetic chain. The immediate electron acceptor for the enzyme in this species is believed to be plastoquinone. Couples the redox reaction to proton translocation, and thus conserves the redox energy in a proton gradient. Cyanobacterial NDH-1 also plays a role in inorganic carbon-concentration. The chain is NAD(P)H-quinone oxidoreductase subunit K from Thermosynechococcus vestitus (strain NIES-2133 / IAM M-273 / BP-1).